Consider the following 379-residue polypeptide: Homoserine O-succinyltransferase (379 aa).

The 310-residue stretch at 51–360 (NAVLICHALS…DAPQGHDAFL (310 aa)) folds into the AB hydrolase-1 domain. Ser157 (nucleophile) is an active-site residue. Position 227 (Arg227) interacts with substrate. Catalysis depends on residues Asp323 and His356. Substrate is bound at residue Asp357.

This sequence belongs to the AB hydrolase superfamily. MetX family. In terms of assembly, homodimer.

The protein localises to the cytoplasm. The catalysed reaction is L-homoserine + succinyl-CoA = O-succinyl-L-homoserine + CoA. It participates in amino-acid biosynthesis; L-methionine biosynthesis via de novo pathway; O-succinyl-L-homoserine from L-homoserine: step 1/1. Functionally, transfers a succinyl group from succinyl-CoA to L-homoserine, forming succinyl-L-homoserine. This chain is Homoserine O-succinyltransferase, found in Pseudomonas syringae pv. tomato (strain ATCC BAA-871 / DC3000).